A 253-amino-acid chain; its full sequence is Phycoerythrobilin:ferredoxin oxidoreductase (253 aa).

This sequence belongs to the HY2 family.

The catalysed reaction is (3Z)-phycoerythrobilin + oxidized 2[4Fe-4S]-[ferredoxin] = 15,16-dihydrobiliverdin + reduced 2[4Fe-4S]-[ferredoxin] + 2 H(+). Its function is as follows. Catalyzes the two-electron reduction of the C2 and C3(1) diene system of 15,16-dihydrobiliverdin. The sequence is that of Phycoerythrobilin:ferredoxin oxidoreductase from Prochlorococcus marinus (strain MIT 9301).